Here is a 428-residue protein sequence, read N- to C-terminus: Cell division cycle 20.6, cofactor of APC complex (428 aa).

WD repeat units follow at residues 106–145 (WFLT…TSKL), 150–189 (DENG…HVRT), 193–230 (GHES…SIIG), 234–273 (GHTE…SNPT), 282–324 (EHTA…CLNS), 326–367 (ETGS…KMAE), and 370–409 (GHTS…PKTT).

Belongs to the WD repeat CDC20/Fizzy family. As to quaternary structure, the APC/C is composed of at least 11 subunits that stay tightly associated throughout the cell cycle.

Its subcellular location is the nucleus. The protein operates within protein modification; protein ubiquitination. In terms of biological role, component of the anaphase promoting complex/cyclosome (APC/C), a cell cycle-regulated E3 ubiquitin-protein ligase complex that controls progression through mitosis and the G1 phase of the cell cycle. The polypeptide is Cell division cycle 20.6, cofactor of APC complex (CDC20-6) (Arabidopsis thaliana (Mouse-ear cress)).